A 729-amino-acid chain; its full sequence is Fatty acid oxidation complex subunit alpha (729 aa).

The segment at 1 to 189 (MLYKGDTLYL…KIGLVDGVVA (189 aa)) is enoyl-CoA hydratase/isomerase. Residue Asp-296 participates in substrate binding. Positions 311 to 729 (ETPKHAAVLG…ARPVGALKTA (419 aa)) are 3-hydroxyacyl-CoA dehydrogenase. NAD(+) is bound by residues Met-324, Asp-343, 400 to 402 (VVE), Lys-407, and Ser-429. The For 3-hydroxyacyl-CoA dehydrogenase activity role is filled by His-450. NAD(+) is bound at residue Asn-453. Substrate is bound by residues Asn-500 and Tyr-660.

It in the N-terminal section; belongs to the enoyl-CoA hydratase/isomerase family. The protein in the C-terminal section; belongs to the 3-hydroxyacyl-CoA dehydrogenase family. Heterotetramer of two alpha chains (FadB) and two beta chains (FadA).

The catalysed reaction is a (3S)-3-hydroxyacyl-CoA + NAD(+) = a 3-oxoacyl-CoA + NADH + H(+). It catalyses the reaction a (3S)-3-hydroxyacyl-CoA = a (2E)-enoyl-CoA + H2O. The enzyme catalyses a 4-saturated-(3S)-3-hydroxyacyl-CoA = a (3E)-enoyl-CoA + H2O. It carries out the reaction (3S)-3-hydroxybutanoyl-CoA = (3R)-3-hydroxybutanoyl-CoA. The catalysed reaction is a (3Z)-enoyl-CoA = a 4-saturated (2E)-enoyl-CoA. It catalyses the reaction a (3E)-enoyl-CoA = a 4-saturated (2E)-enoyl-CoA. It participates in lipid metabolism; fatty acid beta-oxidation. Functionally, involved in the aerobic and anaerobic degradation of long-chain fatty acids via beta-oxidation cycle. Catalyzes the formation of 3-oxoacyl-CoA from enoyl-CoA via L-3-hydroxyacyl-CoA. It can also use D-3-hydroxyacyl-CoA and cis-3-enoyl-CoA as substrate. This is Fatty acid oxidation complex subunit alpha from Klebsiella pneumoniae subsp. pneumoniae (strain ATCC 700721 / MGH 78578).